The following is a 158-amino-acid chain: MLP-like protein 43 (158 aa).

Position 2 is an N-acetylalanine (Ala2).

This sequence belongs to the MLP family.

In Arabidopsis thaliana (Mouse-ear cress), this protein is MLP-like protein 43 (MLP43).